Consider the following 536-residue polypeptide: Copine-1 (536 aa).

C2 domains lie at 1–113 (MAHC…TLPL) and 122–244 (GRGT…ECIH). The Ca(2+) site is built by aspartate 21, aspartate 27, aspartate 79, aspartate 81, aspartate 91, aspartate 152, and aspartate 158. Lysine 170 bears the N6-acetyllysine mark. Ca(2+)-binding residues include aspartate 213, aspartate 215, and aspartate 221. One can recognise a VWFA domain in the interval 282 to 484 (QINFTVGVDF…AARDIVQFVP (203 aa)).

The protein belongs to the copine family. Homodimer; homodimerizes via its C2 domains. Interacts with p65/RELA (via N-terminus); this interaction induces proteolytic cleavage of p65/RELA subunit and inhibition of NF-kappa-B transcriptional activity. Interacts (via VWFA domain) with ACTB, CCDC22, MYCBP2, PPP5C, RDX and UBE2O. Ca(2+) serves as cofactor. Expressed in liver, brain, heart, intestine, kidney and lung (at protein level).

The protein resides in the nucleus. The protein localises to the cytoplasm. Its subcellular location is the cell membrane. In terms of biological role, calcium-dependent phospholipid-binding protein that plays a role in calcium-mediated intracellular processes. Involved in the TNF-alpha receptor signaling pathway in a calcium-dependent manner. Exhibits calcium-dependent phospholipid binding properties. Plays a role in neuronal progenitor cell differentiation; induces neurite outgrowth via a AKT-dependent signaling cascade and calcium-independent manner. May recruit target proteins to the cell membrane in a calcium-dependent manner. May function in membrane trafficking. Involved in TNF-alpha-induced NF-kappa-B transcriptional repression by inducing endoprotease processing of the transcription factor NF-kappa-B p65/RELA subunit. Also induces endoprotease processing of NF-kappa-B p50/NFKB1, p52/NFKB2, RELB and REL. The chain is Copine-1 from Rattus norvegicus (Rat).